Reading from the N-terminus, the 190-residue chain is Threonylcarbamoyl-AMP synthase (190 aa).

The YrdC-like domain maps to 9 to 190 (FLQLALARQT…IDIVTGQQFR (182 aa)).

This sequence belongs to the SUA5 family. TsaC subfamily.

The protein localises to the cytoplasm. The catalysed reaction is L-threonine + hydrogencarbonate + ATP = L-threonylcarbamoyladenylate + diphosphate + H2O. Functionally, required for the formation of a threonylcarbamoyl group on adenosine at position 37 (t(6)A37) in tRNAs that read codons beginning with adenine. Catalyzes the conversion of L-threonine, HCO(3)(-)/CO(2) and ATP to give threonylcarbamoyl-AMP (TC-AMP) as the acyladenylate intermediate, with the release of diphosphate. The polypeptide is Threonylcarbamoyl-AMP synthase (Marinobacter nauticus (strain ATCC 700491 / DSM 11845 / VT8) (Marinobacter aquaeolei)).